Consider the following 281-residue polypeptide: Probable endonuclease 4 (281 aa).

Positions 69, 109, 145, 179, 182, 216, 229, 231, and 261 each coordinate Zn(2+).

The protein belongs to the AP endonuclease 2 family. The cofactor is Zn(2+).

The enzyme catalyses Endonucleolytic cleavage to 5'-phosphooligonucleotide end-products.. In terms of biological role, endonuclease IV plays a role in DNA repair. It cleaves phosphodiester bonds at apurinic or apyrimidinic (AP) sites, generating a 3'-hydroxyl group and a 5'-terminal sugar phosphate. The protein is Probable endonuclease 4 of Glaesserella parasuis serovar 5 (strain SH0165) (Haemophilus parasuis).